The sequence spans 499 residues: U4/U6 small nuclear ribonucleoprotein Prp31 (499 aa).

Residues 1–43 (MSLADELLADLEEAAEEEEGGSYGEEEEEPAIEDVQEETQLDL) are disordered. Residues 7-40 (LLADLEEAAEEEEGGSYGEEEEEPAIEDVQEETQ) are compositionally biased toward acidic residues. Coiled-coil stretches lie at residues 85-120 (EAAP…KYSK) and 181-215 (DEEL…MSFI). Positions 215-333 (IAPNLSIIIG…IERKFDKWQE (119 aa)) constitute a Nop domain. The disordered stretch occupies residues 334 to 357 (PPPVKQVKPLPAPLDGQRKKRGGR). Positions 351 to 364 (RKKRGGRRYRKMKE) match the Nuclear localization signal (NLS) motif. Residues serine 379, serine 395, and serine 432 each carry the phosphoserine modification. Lysine 438 bears the N6-acetyllysine mark. Position 439 is a phosphoserine (serine 439). Threonine 440 is subject to Phosphothreonine. Position 450 is a phosphoserine (serine 450). Threonine 455 bears the Phosphothreonine mark. Residues lysine 471 and lysine 478 each participate in a glycyl lysine isopeptide (Lys-Gly) (interchain with G-Cter in SUMO2) cross-link.

This sequence belongs to the PRP31 family. In terms of assembly, identified in the spliceosome B complex. Component of the U4/U6-U5 tri-snRNP complex composed of the U4, U6 and U5 snRNAs and at least PRPF3, PRPF4, PRPF6, PRPF8, PRPF31, SNRNP200, TXNL4A, SNRNP40, DDX23, CD2BP2, PPIH, SNU13, EFTUD2, SART1 and USP39. Interacts with a complex formed by SNU13 and U4 snRNA, but not with SNU13 or U4 snRNA alone. The complex formed by SNU13 and PRPF31 also binds U4atac snRNA, a characteristic component of specific, less abundant spliceosomal complexes. Interacts with PRPF6/U5 snRNP-associated 102 kDa protein. Component of some MLL1/MLL complex, at least composed of the core components KMT2A/MLL1, ASH2L, HCFC1/HCF1, WDR5 and RBBP5, as well as the facultative components BACC1, CHD8, E2F6, HSP70, INO80C, KANSL1, LAS1L, MAX, MCRS1, MGA, KAT8/MOF, PELP1, PHF20, PRP31, RING2, RUVB1/TIP49A, RUVB2/TIP49B, SENP3, TAF1, TAF4, TAF6, TAF7, TAF9 and TEX10. Interacts (via its NLS) with CTNNBL1. Interacts with USH1G. In terms of processing, phosphorylated by PRP4K during spliceosome assembly.

It is found in the nucleus. It localises to the nucleus speckle. The protein resides in the cajal body. Functionally, involved in pre-mRNA splicing as component of the spliceosome. Required for the assembly of the U4/U5/U6 tri-snRNP complex, one of the building blocks of the spliceosome. The chain is U4/U6 small nuclear ribonucleoprotein Prp31 (Prpf31) from Mus musculus (Mouse).